Consider the following 334-residue polypeptide: Antho-RFamide neuropeptides (334 aa).

The first 26 residues, 1 to 26, serve as a signal peptide directing secretion; the sequence is MLVAMTTASYVTILVTLLFHILTINA. Positions 27–116 are excised as a propeptide; the sequence is KTVTKRAKET…REFQGRFGRE (90 aa). Composition is skewed to basic and acidic residues over residues 115-289 and 303-334; these read REQG…RELL and PQTR…ANKS. The segment at 115-334 is disordered; it reads REQGRFGREE…ESNDEEANKS (220 aa). A Phenylalanine amide modification is found at F120. Positions 122–125 are excised as a propeptide; it reads REED. F129 is modified (phenylalanine amide). Positions 131 to 134 are excised as a propeptide; the sequence is REED. F138 carries the phenylalanine amide modification. Residues 140–142 constitute a propeptide that is removed on maturation; sequence REE. Phenylalanine amide is present on F146. Residues 148–151 constitute a propeptide that is removed on maturation; that stretch reads REED. Phenylalanine amide is present on F155. Residues 157–160 constitute a propeptide that is removed on maturation; the sequence is REED. F164 carries the post-translational modification Phenylalanine amide. A propeptide spanning residues 166–169 is cleaved from the precursor; that stretch reads REED. Position 173 is a phenylalanine amide (F173). The propeptide occupies 175 to 178; it reads REEE. F182 is subject to Phenylalanine amide. Residues 184–187 constitute a propeptide that is removed on maturation; that stretch reads REED. The residue at position 191 (F191) is a Phenylalanine amide. Residues 193–196 constitute a propeptide that is removed on maturation; the sequence is REEE. F200 is modified (phenylalanine amide). Positions 202–205 are excised as a propeptide; it reads REED. F209 carries the post-translational modification Phenylalanine amide. Positions 211 to 214 are excised as a propeptide; that stretch reads REED. Residue F218 is modified to Phenylalanine amide. The propeptide occupies 220 to 223; the sequence is REEE. F227 bears the Phenylalanine amide mark. Residues 229–233 constitute a propeptide that is removed on maturation; the sequence is KRDED. At F237 the chain carries Phenylalanine amide. Positions 239 to 242 are excised as a propeptide; it reads KRED. F246 is modified (phenylalanine amide). Residues 248–252 constitute a propeptide that is removed on maturation; that stretch reads KRDED. A Phenylalanine amide modification is found at F256. A propeptide spanning residues 258–262 is cleaved from the precursor; the sequence is KRDED. Residue F266 is modified to Phenylalanine amide. The propeptide occupies 268 to 271; it reads KRED. Residue F275 is modified to Phenylalanine amide. Residues 277–280 constitute a propeptide that is removed on maturation; that stretch reads KRED. Position 284 is a phenylalanine amide (F284). A propeptide spanning residues 286-334 is cleaved from the precursor; sequence RELLAKLNKRTTSIQEDPQTRFRDVQMTRRNVAKKDKIEESNDEEANKS.

Belongs to the FARP (FMRFamide related peptide) family. In terms of tissue distribution, neurons associated with smooth muscle fibers.

It localises to the secreted. Not known but it could act as a transmitter at neuromuscular synapses. This Calliactis parasitica (Sea anemone) protein is Antho-RFamide neuropeptides.